We begin with the raw amino-acid sequence, 266 residues long: Small ribosomal subunit protein uS3 (266 aa).

One can recognise a KH type-2 domain in the interval 39–107; it reads VREYLKKKLK…PVHVNIEEIR (69 aa). The interval 214–266 is disordered; that stretch reads PVVEEVTEDKRPRRNARPGDRRPRRDGEGGAPGARRGGPRRGAGKPEDGKTGE. Basic and acidic residues-rich tracts occupy residues 230–241 and 257–266; these read RPGDRRPRRDGE and GKPEDGKTGE.

The protein belongs to the universal ribosomal protein uS3 family. In terms of assembly, part of the 30S ribosomal subunit. Forms a tight complex with proteins S10 and S14.

Functionally, binds the lower part of the 30S subunit head. Binds mRNA in the 70S ribosome, positioning it for translation. This is Small ribosomal subunit protein uS3 from Burkholderia mallei (strain NCTC 10247).